A 1171-amino-acid polypeptide reads, in one-letter code: ATP-dependent helicase/deoxyribonuclease subunit B (1171 aa).

The UvrD-like helicase ATP-binding domain maps to 1–343 (MSLRFVIGRA…LVAEENYRYR (343 aa)). ATP is bound at residue 8–15 (GRAGSGKS). One can recognise a UvrD-like helicase C-terminal domain in the interval 281-587 (MEQPRFHSPA…QFANIPPSLD (307 aa)). Cys805, Cys1129, Cys1132, and Cys1138 together coordinate [4Fe-4S] cluster.

It belongs to the helicase family. AddB/RexB type 1 subfamily. In terms of assembly, heterodimer of AddA and AddB. The cofactor is Mg(2+). Requires [4Fe-4S] cluster as cofactor.

Functionally, the heterodimer acts as both an ATP-dependent DNA helicase and an ATP-dependent, dual-direction single-stranded exonuclease. Recognizes the chi site generating a DNA molecule suitable for the initiation of homologous recombination. The AddB subunit has 5' -&gt; 3' nuclease activity but not helicase activity. This is ATP-dependent helicase/deoxyribonuclease subunit B from Bacillus thuringiensis (strain Al Hakam).